The primary structure comprises 207 residues: MLNKLSSLLKDAGISLTDHQKNQLIAYVNMLHKWNKAYNLTSVRDPNEMLVRHILDSIVVAPYLQGERFIDVGTGPGLPGIPLSIVRPEAHFTLLDSLGKRVRFLRQVQHELKLDNITPVQSRVEVFPAEPPFDGVISRAFASLDDMLNWCHHLPGPSGRYYALKGQLPEDEIASLPKEFQVESVVKLHVPGLEGERHLVVIKPNRI.

S-adenosyl-L-methionine contacts are provided by residues glycine 73, leucine 78, 124–125 (VE), and arginine 139.

It belongs to the methyltransferase superfamily. RNA methyltransferase RsmG family.

The protein localises to the cytoplasm. It carries out the reaction guanosine(527) in 16S rRNA + S-adenosyl-L-methionine = N(7)-methylguanosine(527) in 16S rRNA + S-adenosyl-L-homocysteine. Specifically methylates the N7 position of guanine in position 527 of 16S rRNA. The polypeptide is Ribosomal RNA small subunit methyltransferase G (Escherichia fergusonii (strain ATCC 35469 / DSM 13698 / CCUG 18766 / IAM 14443 / JCM 21226 / LMG 7866 / NBRC 102419 / NCTC 12128 / CDC 0568-73)).